Reading from the N-terminus, the 570-residue chain is Grayanic acid biosynthesis cluster cytochrome P450 monooxygenase (570 aa).

Residues 9-29 (ILTIFWLPIAAAXLYGAGLAI) traverse the membrane as a helical segment. N191 carries an N-linked (GlcNAc...) asparagine glycan. Position 510 (C510) interacts with heme.

The protein belongs to the cytochrome P450 family. The cofactor is heme.

Its subcellular location is the membrane. The protein operates within secondary metabolite biosynthesis. In terms of biological role, non-reducing polyketide synthase; part of the gene cluster that mediates the biosynthesis of orcinol depsidone grayanic acid (GRA), the only major secondary metabolite known in C.grayi. The first step consists in the ring and depside synthesis by PKS16 leading to 4-O-demethylsphaerophorin, involving different orcinol-like rings, one with acetyl CoA and the other with octanoyl CoA as the starter. Further depsidone formation by the GRA cluster-specific cytochrome P450 leads to 4-O-demethylgrayanic acid. Finally, the cluster specific O-methyltransferase probably converts the 4-O-demethylgrayanic acid into grayanic acid. This is Grayanic acid biosynthesis cluster cytochrome P450 monooxygenase from Cladonia grayi (Gray's cup lichen).